The sequence spans 314 residues: Lysophospholipase D GDPD1 (314 aa).

Residues 1–3 (MSS) lie on the Extracellular side of the membrane. Residues 4 to 24 (TAAFCLLSTLGGYLVTSFLLL) traverse the membrane as a helical segment. The Cytoplasmic segment spans residues 25-195 (KYPALLHQRK…VDKCYKENSD (171 aa)). The 270-residue stretch at 40-309 (SRHISHRGGA…DYPTKLKEFL (270 aa)) folds into the GP-PDE domain. A divalent metal cation is bound by residues Glu72, Asp74, and His87. Residues 196 to 216 (IPILFSLQRVLLILGLFFTGL) traverse the membrane as a helical segment. The Extracellular segment spans residues 217–314 (LPFVPIREQF…LKEFLNNMSA (98 aa)).

Belongs to the glycerophosphoryl diester phosphodiesterase family.

The protein localises to the cytoplasm. Its subcellular location is the membrane. It is found in the perinuclear region. It localises to the endoplasmic reticulum. It carries out the reaction a 1-O-alkyl-sn-glycero-3-phosphocholine + H2O = a 1-O-alkyl-sn-glycero-3-phosphate + choline + H(+). The catalysed reaction is 1-hexadecanoyl-sn-glycero-3-phosphocholine + H2O = 1-hexadecanoyl-sn-glycero-3-phosphate + choline + H(+). It catalyses the reaction 1-hexadecanoyl-sn-glycero-3-phosphoethanolamine + H2O = 1-hexadecanoyl-sn-glycero-3-phosphate + ethanolamine + H(+). The enzyme catalyses N-hexadecanoyl-sn-glycero-3-phosphoethanolamine + H2O = N-hexadecanoylethanolamine + sn-glycerol 3-phosphate + H(+). It carries out the reaction N-(5Z,8Z,11Z,14Z-eicosatetraenoyl)-1-(9Z-octadecenoyl)-sn-glycero-3-phosphoethanolamine + H2O = N-(5Z,8Z,11Z,14Z-eicosatetraenoyl)-ethanolamine + 1-(9Z-octadecenoyl)-sn-glycero-3-phosphate + H(+). The catalysed reaction is N,1-di-(9Z-octadecenoyl)-sn-glycero-3-phosphoethanolamine + H2O = N-(9Z-octadecenoyl) ethanolamine + 1-(9Z-octadecenoyl)-sn-glycero-3-phosphate + H(+). It catalyses the reaction N-hexadecanoyl-1-(9Z-octadecenoyl)-sn-glycero-3-phosphoethanolamine + H2O = N-hexadecanoylethanolamine + 1-(9Z-octadecenoyl)-sn-glycero-3-phosphate + H(+). The enzyme catalyses 1-O-hexadecyl-sn-glycero-3-phosphocholine + H2O = 1-O-hexadecyl-sn-glycero-3-phosphate + choline + H(+). It carries out the reaction 1-(9Z-octadecenoyl)-sn-glycero-3-phosphocholine + H2O = 1-(9Z-octadecenoyl)-sn-glycero-3-phosphate + choline + H(+). The catalysed reaction is N,1-dihexadecanoyl-sn-glycero-3-phosphoethanolamine + H2O = N-hexadecanoylethanolamine + 1-hexadecanoyl-sn-glycero-3-phosphate + H(+). It catalyses the reaction 1-O-(1Z-octadecenyl)-sn-glycero-3-phospho-(N-5Z,8Z,11Z,14Z-eicosatetraenoyl)-ethanolamine + H2O = 1-O-(1Z-octadecenyl)-sn-glycero-3-phosphate + N-(5Z,8Z,11Z,14Z-eicosatetraenoyl)-ethanolamine + H(+). The enzyme catalyses 1-O-(1Z-octadecenyl)-sn-glycero-3-phospho-(N-9Z-octadecenoyl)-ethanolamine + H2O = 1-O-(1Z-octadecenyl)-sn-glycero-3-phosphate + N-(9Z-octadecenoyl) ethanolamine + H(+). It carries out the reaction 1-O-(1Z-octadecenyl)-sn-glycero-3-phospho-N-hexadecanoyl-ethanolamine + H2O = 1-O-(1Z-octadecenyl)-sn-glycero-3-phosphate + N-hexadecanoylethanolamine + H(+). Its activity is regulated as follows. Lysophospholipase D activity is increased by magnesium and manganese and inhibited by calcium in a concentration dependent manner. Loss of lysophospholipase D activity by addition of EDTA. In terms of biological role, hydrolyzes lysoglycerophospholipids to produce lysophosphatidic acid (LPA) and the corresponding amines. Shows a preference for 1-O-alkyl-sn-glycero-3-phosphocholine (lyso-PAF), lysophosphatidylethanolamine (lyso-PE) and lysophosphatidylcholine (lyso-PC). May be involved in bioactive N-acylethanolamine biosynthesis from both N-acyl-lysoplasmenylethanolamin (N-acyl-lysoPlsEt) and N-acyl-lysophosphatidylethanolamin (N-acyl-lysoPE). In addition, hydrolyzes glycerophospho-N-acylethanolamine to N-acylethanolamine. Does not display glycerophosphodiester phosphodiesterase activity, since it cannot hydrolyze either glycerophosphoinositol or glycerophosphocholine. The sequence is that of Lysophospholipase D GDPD1 from Rattus norvegicus (Rat).